The primary structure comprises 174 residues: Adenine phosphoribosyltransferase (174 aa).

It belongs to the purine/pyrimidine phosphoribosyltransferase family. Homodimer.

The protein resides in the cytoplasm. The enzyme catalyses AMP + diphosphate = 5-phospho-alpha-D-ribose 1-diphosphate + adenine. Its pathway is purine metabolism; AMP biosynthesis via salvage pathway; AMP from adenine: step 1/1. In terms of biological role, catalyzes a salvage reaction resulting in the formation of AMP, that is energically less costly than de novo synthesis. The sequence is that of Adenine phosphoribosyltransferase from Agathobacter rectalis (strain ATCC 33656 / DSM 3377 / JCM 17463 / KCTC 5835 / VPI 0990) (Eubacterium rectale).